A 312-amino-acid polypeptide reads, in one-letter code: Ribosomal RNA small subunit methyltransferase H (312 aa).

Residues Gly-35–His-37, Asp-55, Phe-79, Asp-100, and Gln-107 contribute to the S-adenosyl-L-methionine site. Residues Leu-279–Ala-312 form a disordered region.

Belongs to the methyltransferase superfamily. RsmH family.

Its subcellular location is the cytoplasm. The enzyme catalyses cytidine(1402) in 16S rRNA + S-adenosyl-L-methionine = N(4)-methylcytidine(1402) in 16S rRNA + S-adenosyl-L-homocysteine + H(+). In terms of biological role, specifically methylates the N4 position of cytidine in position 1402 (C1402) of 16S rRNA. This chain is Ribosomal RNA small subunit methyltransferase H, found in Aromatoleum aromaticum (strain DSM 19018 / LMG 30748 / EbN1) (Azoarcus sp. (strain EbN1)).